We begin with the raw amino-acid sequence, 360 residues long: Nicotinate-nucleotide--dimethylbenzimidazole phosphoribosyltransferase (360 aa).

The Proton acceptor role is filled by Glu-327.

The protein belongs to the CobT family.

The enzyme catalyses 5,6-dimethylbenzimidazole + nicotinate beta-D-ribonucleotide = alpha-ribazole 5'-phosphate + nicotinate + H(+). It functions in the pathway nucleoside biosynthesis; alpha-ribazole biosynthesis; alpha-ribazole from 5,6-dimethylbenzimidazole: step 1/2. Functionally, catalyzes the synthesis of alpha-ribazole-5'-phosphate from nicotinate mononucleotide (NAMN) and 5,6-dimethylbenzimidazole (DMB). The protein is Nicotinate-nucleotide--dimethylbenzimidazole phosphoribosyltransferase of Shewanella baltica (strain OS155 / ATCC BAA-1091).